The sequence spans 412 residues: Divalent metal cation transporter MntH (412 aa).

The next 11 membrane-spanning stretches (helical) occupy residues 19 to 39 (LALMGPAFIAAIGYIDPGNFA), 46 to 66 (ASFGYKLLWVVVWANLMAMLI), 94 to 114 (VWFYWVQAEIIAMATDLAEFI), 122 to 142 (LILGISLLQGAVLTGIATFLI), 156 to 176 (VIGGLLLFVAAAYIVELIFSQ), 196 to 216 (AVFLAAGVLGATIMPHVIYLH), 241 to 261 (IAMTIAGFVNLAMMATAAAAF), 290 to 310 (VFGLSLVAAGLSSTVVGTLAG), 329 to 349 (TITMMPSFIVILMGLDPTRIL), 350 to 370 (VMSQVLLSFGIALALVPLLIF), and 389 to 409 (IGWMIVVLVVALNIWLLVGTA).

It belongs to the NRAMP family.

The protein localises to the cell inner membrane. Functionally, h(+)-stimulated, divalent metal cation uptake system. The polypeptide is Divalent metal cation transporter MntH (Citrobacter koseri (strain ATCC BAA-895 / CDC 4225-83 / SGSC4696)).